A 506-amino-acid polypeptide reads, in one-letter code: Sodium-coupled neutral amino acid symporter 2 (506 aa).

The disordered stretch occupies residues 1–23; the sequence is MKKAEMGRFNISPDEDSSSYSSN. The Cytoplasmic segment spans residues 1 to 76; the sequence is MKKAEMGRFN…HPGTTSFGMS (76 aa). The segment at 1–96 is regulates protein turnover upon amino acid deprivation; sequence MKKAEMGRFN…SGILGLSYAM (96 aa). Phosphoserine is present on residues serine 12, serine 21, serine 22, and serine 55. The chain crosses the membrane as a helical span at residues 77–96; it reads VFNLSNAIVGSGILGLSYAM. Na(+) is bound at residue asparagine 82. Topologically, residues 97–102 are extracellular; it reads ANTGIA. Residues 103-123 traverse the membrane as a helical segment; sequence LFIILLTFVSIFSLYSVHLLL. The Cytoplasmic portion of the chain corresponds to 124–158; it reads KTANEGGSLLYEQLGYKAFGLVGKLAASGSITMQN. The helical transmembrane segment at 159-177 threads the bilayer; the sequence is IGAMSSYLFIVKYELPLVI. Residues 178-188 lie on the Extracellular side of the membrane; that stretch reads QALTNIEDKTG. Residues 189–209 form a helical membrane-spanning segment; that stretch reads LWYLNGNYLVLLVSLVVILPL. The Cytoplasmic portion of the chain corresponds to 210-217; sequence SLFRNLGY. Residues 218–238 form a helical membrane-spanning segment; sequence LGYTSGLSLLCMVFFLIVVIC. Topologically, residues 239-292 are extracellular; sequence KKFQVPCPVEAALIINETINTTLTQPTALVPALSHNVTENDSCRPHYFIFNSQT. Cysteine 245 and cysteine 281 form a disulfide bridge. 2 N-linked (GlcNAc...) asparagine glycosylation sites follow: asparagine 258 and asparagine 274. A helical transmembrane segment spans residues 293-313; the sequence is VYAVPILIFSFVCHPAVLPIY. The Cytoplasmic portion of the chain corresponds to 314–329; sequence EELKDRSRRRMMNVSK. The helical transmembrane segment at 330 to 350 threads the bilayer; sequence ISFFAMFLMYLLAALFGYLTF. Residues 351–371 lie on the Extracellular side of the membrane; sequence YEHVESELLHTYSSILGTDIL. A helical transmembrane segment spans residues 372-392; it reads LLIVRLAVLMAVTLTVPVVIF. Threonine 386 serves as a coordination point for Na(+). The Cytoplasmic portion of the chain corresponds to 393-413; sequence PIRSSVTHLLCASKDFSWWRH. A helical membrane pass occupies residues 414–434; sequence SLITVSILAFTNLLVIFVPTI. Over 435-436 the chain is Extracellular; sequence RD. A helical transmembrane segment spans residues 437-457; that stretch reads IFGFIGASAASMLIFILPSAF. Topologically, residues 458–472 are cytoplasmic; that stretch reads YIKLVKKEPMKSVQK. The chain crosses the membrane as a helical span at residues 473–495; that stretch reads IGALFFLLSGVLVMTGSMALIVL. The Extracellular segment spans residues 496–506; the sequence is DWVHNAPGGGH.

The protein belongs to the amino acid/polyamine transporter 2 family. Polyubiquitination by NEDD4L regulates the degradation and the activity of SLC38A2.

It is found in the cell membrane. It catalyses the reaction L-alanine(in) + Na(+)(in) = L-alanine(out) + Na(+)(out). It carries out the reaction glycine(in) + Na(+)(in) = glycine(out) + Na(+)(out). The enzyme catalyses L-serine(in) + Na(+)(in) = L-serine(out) + Na(+)(out). The catalysed reaction is L-proline(in) + Na(+)(in) = L-proline(out) + Na(+)(out). It catalyses the reaction L-methionine(in) + Na(+)(in) = L-methionine(out) + Na(+)(out). It carries out the reaction L-histidine(in) + Na(+)(in) = L-histidine(out) + Na(+)(out). The enzyme catalyses L-asparagine(in) + Na(+)(in) = L-asparagine(out) + Na(+)(out). The catalysed reaction is L-glutamine(in) + Na(+)(in) = L-glutamine(out) + Na(+)(out). It catalyses the reaction L-threonine(in) + Na(+)(in) = L-threonine(out) + Na(+)(out). It carries out the reaction L-leucine(in) + Na(+)(in) = L-leucine(out) + Na(+)(out). The enzyme catalyses L-phenylalanine(in) + Na(+)(in) = L-phenylalanine(out) + Na(+)(out). Inhibited by N-methyl-D-glucamine. Inhibited by choline. Allosteric regulation of sodium ions binding by pH. Functionally, symporter that cotransports neutral amino acids and sodium ions from the extracellular to the intracellular side of the cell membrane. The transport is pH-sensitive, Li(+)-intolerant, electrogenic, driven by the Na(+) electrochemical gradient and cotransports of neutral amino acids and sodium ions with a stoichiometry of 1:1. May function in the transport of amino acids at the blood-brain barrier. May function in the transport of amino acids in the supply of maternal nutrients to the fetus through the placenta. Maintains a key metabolic glutamine/glutamate balance underpinning retrograde signaling by dendritic release of the neurotransmitter glutamate. Transports L-proline in differentiating osteoblasts for the efficient synthesis of proline-enriched proteins and provides proline essential for osteoblast differentiation and bone formation during bone development. The sequence is that of Sodium-coupled neutral amino acid symporter 2 from Pan paniscus (Pygmy chimpanzee).